Consider the following 247-residue polypeptide: tRNA pseudouridine synthase A (247 aa).

The active-site Nucleophile is the Asp-53. A substrate-binding site is contributed by Tyr-111.

This sequence belongs to the tRNA pseudouridine synthase TruA family. In terms of assembly, homodimer.

It carries out the reaction uridine(38/39/40) in tRNA = pseudouridine(38/39/40) in tRNA. In terms of biological role, formation of pseudouridine at positions 38, 39 and 40 in the anticodon stem and loop of transfer RNAs. The chain is tRNA pseudouridine synthase A from Bacillus velezensis (strain DSM 23117 / BGSC 10A6 / LMG 26770 / FZB42) (Bacillus amyloliquefaciens subsp. plantarum).